We begin with the raw amino-acid sequence, 117 residues long: Large ribosomal subunit protein uL18 (117 aa).

This sequence belongs to the universal ribosomal protein uL18 family. As to quaternary structure, part of the 50S ribosomal subunit; part of the 5S rRNA/L5/L18/L25 subcomplex. Contacts the 5S and 23S rRNAs.

This is one of the proteins that bind and probably mediate the attachment of the 5S RNA into the large ribosomal subunit, where it forms part of the central protuberance. This chain is Large ribosomal subunit protein uL18, found in Colwellia psychrerythraea (strain 34H / ATCC BAA-681) (Vibrio psychroerythus).